The following is a 185-amino-acid chain: MIEDIKKDAQDRMGKCVEATKAQMAKVRTGRAHPSLLDTIQVNYYGSMTPLKQVGNVTIEDSRTLAVNVFDRSAIQAVEKAIMSSDLGLNPMSAGATIRIPLPPLTEERRRDLVKVVRAEAEQGRVAIRNVRRDANSSFKQLEKEKECTEDDVRRSEEEVQKITDLHIKKIDELLAAKEAELMEV.

It belongs to the RRF family.

It localises to the cytoplasm. In terms of biological role, responsible for the release of ribosomes from messenger RNA at the termination of protein biosynthesis. May increase the efficiency of translation by recycling ribosomes from one round of translation to another. This is Ribosome-recycling factor from Shewanella amazonensis (strain ATCC BAA-1098 / SB2B).